Here is a 124-residue protein sequence, read N- to C-terminus: Large ribosomal subunit protein bL12 (124 aa).

This sequence belongs to the bacterial ribosomal protein bL12 family. Homodimer. Part of the ribosomal stalk of the 50S ribosomal subunit. Forms a multimeric L10(L12)X complex, where L10 forms an elongated spine to which 2 to 4 L12 dimers bind in a sequential fashion. Binds GTP-bound translation factors.

In terms of biological role, forms part of the ribosomal stalk which helps the ribosome interact with GTP-bound translation factors. Is thus essential for accurate translation. The polypeptide is Large ribosomal subunit protein bL12 (Wolinella succinogenes (strain ATCC 29543 / DSM 1740 / CCUG 13145 / JCM 31913 / LMG 7466 / NCTC 11488 / FDC 602W) (Vibrio succinogenes)).